The primary structure comprises 426 residues: UDP-N-acetylmuramoylalanine--D-glutamate ligase (426 aa).

Residue 112-118 (GSVGKST) coordinates ATP.

This sequence belongs to the MurCDEF family.

The protein localises to the cytoplasm. The enzyme catalyses UDP-N-acetyl-alpha-D-muramoyl-L-alanine + D-glutamate + ATP = UDP-N-acetyl-alpha-D-muramoyl-L-alanyl-D-glutamate + ADP + phosphate + H(+). Its pathway is cell wall biogenesis; peptidoglycan biosynthesis. In terms of biological role, cell wall formation. Catalyzes the addition of glutamate to the nucleotide precursor UDP-N-acetylmuramoyl-L-alanine (UMA). This chain is UDP-N-acetylmuramoylalanine--D-glutamate ligase, found in Thermosipho melanesiensis (strain DSM 12029 / CIP 104789 / BI429).